Reading from the N-terminus, the 162-residue chain is Putative ankyrin repeat protein RBE_0151 (162 aa).

ANK repeat units follow at residues 49 to 77 (EKWT…NINI), 81 to 110 (KGRT…VVAP), and 114 to 145 (YGWS…EHDK).

This Rickettsia bellii (strain RML369-C) protein is Putative ankyrin repeat protein RBE_0151.